We begin with the raw amino-acid sequence, 388 residues long: Reducing end xylose-releasing exo-oligoxylanase (388 aa).

The active-site Proton donor is the E70. The active-site Proton acceptor is D263.

Belongs to the glycosyl hydrolase 8 (cellulase D) family.

The enzyme catalyses Hydrolysis of (1-&gt;4)-beta-D-xylose residues from the reducing end of oligosaccharides.. Functionally, hydrolyzes xylooligosaccharides with a degree of polymerization of greater than or equal to 3, releasing xylose from the reducing end. Only hydrolyzes the beta anomers of xylooligosaccharides, with inversion of anomeric configuration. Hydrolyzes the glucose and xylose-based trisaccharides where xylose is located at the -1 subsite, GXX, XXG and GXG. Does not hydrolyze xylan, chitosan, lichenan, curdlan or carboxymethylcellulose. The protein is Reducing end xylose-releasing exo-oligoxylanase of Halalkalibacterium halodurans (strain ATCC BAA-125 / DSM 18197 / FERM 7344 / JCM 9153 / C-125) (Bacillus halodurans).